A 290-amino-acid polypeptide reads, in one-letter code: Acetyl-coenzyme A carboxylase carboxyl transferase subunit beta (290 aa).

Positions 27–290 (LWVKCPSCEA…LQRQPADALA (264 aa)) constitute a CoA carboxyltransferase N-terminal domain. Zn(2+)-binding residues include Cys-31, Cys-34, Cys-50, and Cys-53. The segment at 31–53 (CPSCEAVLYRNDVDANLHVCPKC) adopts a C4-type zinc-finger fold.

This sequence belongs to the AccD/PCCB family. In terms of assembly, acetyl-CoA carboxylase is a heterohexamer composed of biotin carboxyl carrier protein (AccB), biotin carboxylase (AccC) and two subunits each of ACCase subunit alpha (AccA) and ACCase subunit beta (AccD). Zn(2+) serves as cofactor.

The protein localises to the cytoplasm. It carries out the reaction N(6)-carboxybiotinyl-L-lysyl-[protein] + acetyl-CoA = N(6)-biotinyl-L-lysyl-[protein] + malonyl-CoA. It functions in the pathway lipid metabolism; malonyl-CoA biosynthesis; malonyl-CoA from acetyl-CoA: step 1/1. In terms of biological role, component of the acetyl coenzyme A carboxylase (ACC) complex. Biotin carboxylase (BC) catalyzes the carboxylation of biotin on its carrier protein (BCCP) and then the CO(2) group is transferred by the transcarboxylase to acetyl-CoA to form malonyl-CoA. This is Acetyl-coenzyme A carboxylase carboxyl transferase subunit beta from Burkholderia multivorans (strain ATCC 17616 / 249).